A 417-amino-acid polypeptide reads, in one-letter code: 4-hydroxy-3-methylbut-2-en-1-yl diphosphate synthase (flavodoxin) (417 aa).

4 residues coordinate [4Fe-4S] cluster: Cys-304, Cys-307, Cys-350, and Glu-357.

Belongs to the IspG family. [4Fe-4S] cluster is required as a cofactor.

The enzyme catalyses (2E)-4-hydroxy-3-methylbut-2-enyl diphosphate + oxidized [flavodoxin] + H2O + 2 H(+) = 2-C-methyl-D-erythritol 2,4-cyclic diphosphate + reduced [flavodoxin]. It participates in isoprenoid biosynthesis; isopentenyl diphosphate biosynthesis via DXP pathway; isopentenyl diphosphate from 1-deoxy-D-xylulose 5-phosphate: step 5/6. Its function is as follows. Converts 2C-methyl-D-erythritol 2,4-cyclodiphosphate (ME-2,4cPP) into 1-hydroxy-2-methyl-2-(E)-butenyl 4-diphosphate. The polypeptide is 4-hydroxy-3-methylbut-2-en-1-yl diphosphate synthase (flavodoxin) (Sinorhizobium medicae (strain WSM419) (Ensifer medicae)).